Reading from the N-terminus, the 110-residue chain is Small ribosomal subunit protein bS6 (110 aa).

This sequence belongs to the bacterial ribosomal protein bS6 family.

Its function is as follows. Binds together with bS18 to 16S ribosomal RNA. The chain is Small ribosomal subunit protein bS6 (rpsF) from Aquifex aeolicus (strain VF5).